Reading from the N-terminus, the 344-residue chain is Aspartate carbamoyltransferase catalytic subunit (344 aa).

Positions 1–30 (MPESPPLPKRSPLMTSSTTRPASDYPPGGD) are disordered. Carbamoyl phosphate-binding residues include R88 and T89. K116 lines the L-aspartate pocket. Carbamoyl phosphate contacts are provided by R138, H166, and Q169. Residues R199 and R253 each coordinate L-aspartate. Carbamoyl phosphate is bound by residues G294 and P295.

This sequence belongs to the aspartate/ornithine carbamoyltransferase superfamily. ATCase family. As to quaternary structure, heterododecamer (2C3:3R2) of six catalytic PyrB chains organized as two trimers (C3), and six regulatory PyrI chains organized as three dimers (R2).

It carries out the reaction carbamoyl phosphate + L-aspartate = N-carbamoyl-L-aspartate + phosphate + H(+). It participates in pyrimidine metabolism; UMP biosynthesis via de novo pathway; (S)-dihydroorotate from bicarbonate: step 2/3. In terms of biological role, catalyzes the condensation of carbamoyl phosphate and aspartate to form carbamoyl aspartate and inorganic phosphate, the committed step in the de novo pyrimidine nucleotide biosynthesis pathway. The protein is Aspartate carbamoyltransferase catalytic subunit of Sphingopyxis alaskensis (strain DSM 13593 / LMG 18877 / RB2256) (Sphingomonas alaskensis).